Reading from the N-terminus, the 93-residue chain is Class I hydrophobin SSP1 (93 aa).

Positions 1 to 26 (MKYITAISMLATAALTAATPLNGVEA) are cleaved as a signal peptide. 4 disulfide bridges follow: cysteine 39–cysteine 71, cysteine 47–cysteine 65, cysteine 48–cysteine 56, and cysteine 72–cysteine 89.

This sequence belongs to the fungal hydrophobin family. Self-assembles to form functional amyloid fibrils called rodlets. Self-assembly into fibrillar rodlets occurs spontaneously at hydrophobic:hydrophilic interfaces and the rodlets further associate laterally to form amphipathic monolayers.

It is found in the secreted. Its subcellular location is the cell wall. Its function is as follows. Aerial growth, conidiation, and dispersal of filamentous fungi in the environment rely upon a capability of their secreting small amphipathic proteins called hydrophobins (HPBs) with low sequence identity. Class I can self-assemble into an outermost layer of rodlet bundles on aerial cell surfaces, conferring cellular hydrophobicity that supports fungal growth, development and dispersal; whereas Class II form highly ordered films at water-air interfaces through intermolecular interactions but contribute nothing to the rodlet structure. SSP1 is a class I hydrophobin that acts as an effector in the ericoid mycorrhizal interaction with Vaccinium myrtillus. May enhance attachment of the fungus to the root surface and protect the fungal hypha from plant defense compounds. The protein is Class I hydrophobin SSP1 of Oidiodendron maius (strain Zn).